The sequence spans 118 residues: Holo-[acyl-carrier-protein] synthase (118 aa).

Mg(2+) is bound by residues D8 and E58.

Belongs to the P-Pant transferase superfamily. AcpS family. It depends on Mg(2+) as a cofactor.

It localises to the cytoplasm. The catalysed reaction is apo-[ACP] + CoA = holo-[ACP] + adenosine 3',5'-bisphosphate + H(+). Transfers the 4'-phosphopantetheine moiety from coenzyme A to a Ser of acyl-carrier-protein. The protein is Holo-[acyl-carrier-protein] synthase of Streptococcus pyogenes serotype M28 (strain MGAS6180).